Consider the following 312-residue polypeptide: Ribosomal RNA small subunit methyltransferase H (312 aa).

S-adenosyl-L-methionine contacts are provided by residues 33–35 (GGH), aspartate 53, phenylalanine 80, aspartate 102, and glutamine 109.

Belongs to the methyltransferase superfamily. RsmH family.

It is found in the cytoplasm. It carries out the reaction cytidine(1402) in 16S rRNA + S-adenosyl-L-methionine = N(4)-methylcytidine(1402) in 16S rRNA + S-adenosyl-L-homocysteine + H(+). Specifically methylates the N4 position of cytidine in position 1402 (C1402) of 16S rRNA. In Heliobacterium mobile (Heliobacillus mobilis), this protein is Ribosomal RNA small subunit methyltransferase H.